The sequence spans 245 residues: Probable phosphatase YcdX (245 aa).

The Zn(2+) site is built by His-7, His-9, His-15, His-40, Glu-73, His-101, His-131, Asp-192, and His-194.

Belongs to the PHP family. Homotrimer. It depends on Zn(2+) as a cofactor.

The sequence is that of Probable phosphatase YcdX from Shigella flexneri serotype 5b (strain 8401).